The following is a 497-amino-acid chain: MITSSQSALSGEMLMAMLPILIVAGTVVLLMLSIAWRRHHFFNGSLTVIGLNCALFSLYTVWGLFHFSQHDAINVTPLLRINGYSIFYSGLVILASLATCTFAYPWLQGYPDNREEFYLLLLISTLGALVLVSAQHLAAVFLGIELIALPLFGLLGYAYQQNRSLEASIKYFVLSAAASSFLLFGMAMLYAQTGGLSFTSLGNVFNEHVFSKPLILAGMGMILVGFGFKLSLVPFQLWTPDVYQGAPAPVTTFLGTVGKIALLAGVMRFFLYVPTFNVPGLNTALSFMAVASIFFGNLMALTQNNIKRLLGYSSIAHFGYLMIGLIALHQDPMVLERVAVYIVAYLFSSLGVLGVVSLMSSPYKGADAEALFSYRGLFWHRPILAAVMTIMLLSLAGIPMTLGFIAKFFLLLTAVNTHLWVLTATVVIGSAIALYYYLRITVSLFLSPPETLQRDTPKDWAFTAGGIVVWISALLVLVFGIYPQPLISFIKGFNALS.

Helical transmembrane passes span 14-34, 45-65, 86-106, 116-136, 137-157, 171-191, 215-235, 253-273, 281-301, 309-329, 338-358, 385-405, 420-439, and 461-481; these read LMAM…MLSI, SLTV…WGLF, IFYS…AYPW, EFYL…SAQH, LAAV…LLGY, YFVL…MLYA, ILAG…LVPF, FLGT…FLYV, LNTA…LMAL, LLGY…IALH, VAVY…VVSL, AAVM…LGFI, WVLT…YYLR, and AFTA…VFGI.

It belongs to the complex I subunit 2 family. NDH-1 is composed of 13 different subunits. Subunits NuoA, H, J, K, L, M, N constitute the membrane sector of the complex.

It is found in the cell membrane. It carries out the reaction a quinone + NADH + 5 H(+)(in) = a quinol + NAD(+) + 4 H(+)(out). NDH-1 shuttles electrons from NADH, via FMN and iron-sulfur (Fe-S) centers, to quinones in the respiratory chain. The immediate electron acceptor for the enzyme in this species is believed to be ubiquinone. Couples the redox reaction to proton translocation (for every two electrons transferred, four hydrogen ions are translocated across the cytoplasmic membrane), and thus conserves the redox energy in a proton gradient. The protein is NADH-quinone oxidoreductase subunit N of Hamiltonella defensa subsp. Acyrthosiphon pisum (strain 5AT).